Consider the following 1753-residue polypeptide: Negative regulator of sporulation PMD1 (1753 aa).

Kelch repeat units follow at residues 143–198 and 206–253; these read NIYI…VLNE and KLII…KILV. Position 298 is a phosphothreonine (Thr298). The span at 651 to 664 shows a compositional bias: polar residues; the sequence is TTKFGNSSQSSNGS. Disordered regions lie at residues 651–753 and 771–807; these read TTKF…TTCS and LGLS…CTLS. A compositionally biased stretch (low complexity) spans 670–683; the sequence is SKNGNSKSNSNTSL. 4 stretches are compositionally biased toward polar residues: residues 690-699, 740-753, 774-783, and 797-807; these read DFTSSTSSPK, TGTS…TTCS, SEQSGRSTRA, and NDGNDSNCTLS. At Ser838 the chain carries Phosphoserine. Disordered regions lie at residues 875–915, 938–957, and 962–988; these read IASP…LGSS, PLEP…SSLA, and FGRD…ARRI. Residues 880–900 are compositionally biased toward low complexity; that stretch reads QSRQTSFASTASTASVVSSTS. Residues 938–947 show a composition bias toward pro residues; it reads PLEPLPPVPK. Low complexity predominate over residues 979–988; the sequence is KSSSSDARRI. Phosphoserine is present on residues Ser1289, Ser1307, and Ser1356. Disordered stretches follow at residues 1312–1467, 1604–1686, and 1706–1753; these read SPAT…DLDS, PIFA…NKRF, and SAVN…GKRR. Polar residues predominate over residues 1344–1379; that stretch reads VSRQQNFPRRSSSFTETVPTEPTRYNYQNLDSSKSN. Over residues 1399–1430 the composition is skewed to basic and acidic residues; it reads NFDKYKVETLQKRNSNDGKDLDRTNDPLKNRG. The segment covering 1653-1677 has biased composition (polar residues); it reads IKFSQAPSTQISPRTSVTDFTASQQ. At Ser1664 the chain carries Phosphoserine. Residues 1711–1723 show a composition bias toward basic and acidic residues; the sequence is GRKESEGHCEDRS.

Its subcellular location is the cytoplasm. Functionally, negatively regulates early sporulation-specific genes. Seems to exert its function by positively regulating the Ras/cAMP pathway. Required for growth under alkaline conditions. Acts synergetically with MDS3. The chain is Negative regulator of sporulation PMD1 (PMD1) from Saccharomyces cerevisiae (strain ATCC 204508 / S288c) (Baker's yeast).